Consider the following 204-residue polypeptide: Holliday junction branch migration complex subunit RuvA (204 aa).

The segment at 1–64 is domain I; the sequence is MIGKLKGTLE…EEAIRLFGFA (64 aa). The tract at residues 65–143 is domain II; the sequence is TRAEQEWFCM…PFEQAVKTVS (79 aa). The flexible linker stretch occupies residues 144–154; it reads VPQREITHQPA. A domain III region spans residues 154 to 204; the sequence is AHDALSALMKLGFEREQAARALALAMNALEGEAVSSALLIRHSLKLLSSPT.

It belongs to the RuvA family. As to quaternary structure, homotetramer. Forms an RuvA(8)-RuvB(12)-Holliday junction (HJ) complex. HJ DNA is sandwiched between 2 RuvA tetramers; dsDNA enters through RuvA and exits via RuvB. An RuvB hexamer assembles on each DNA strand where it exits the tetramer. Each RuvB hexamer is contacted by two RuvA subunits (via domain III) on 2 adjacent RuvB subunits; this complex drives branch migration. In the full resolvosome a probable DNA-RuvA(4)-RuvB(12)-RuvC(2) complex forms which resolves the HJ.

It is found in the cytoplasm. In terms of biological role, the RuvA-RuvB-RuvC complex processes Holliday junction (HJ) DNA during genetic recombination and DNA repair, while the RuvA-RuvB complex plays an important role in the rescue of blocked DNA replication forks via replication fork reversal (RFR). RuvA specifically binds to HJ cruciform DNA, conferring on it an open structure. The RuvB hexamer acts as an ATP-dependent pump, pulling dsDNA into and through the RuvAB complex. HJ branch migration allows RuvC to scan DNA until it finds its consensus sequence, where it cleaves and resolves the cruciform DNA. The protein is Holliday junction branch migration complex subunit RuvA of Bartonella tribocorum (strain CIP 105476 / IBS 506).